Reading from the N-terminus, the 426-residue chain is Serine--tRNA ligase (426 aa).

The disordered stretch occupies residues 36–66 (KRKHLQERTQDLQSQRNTISKEIGQKKAKGE). A compositionally biased stretch (polar residues) spans 46-55 (DLQSQRNTIS). L-serine is bound at residue 233–235 (TAE). 264 to 266 (RSE) is a binding site for ATP. Glu-287 is an L-serine binding site. 351–354 (EISS) serves as a coordination point for ATP. Ser-387 contributes to the L-serine binding site.

It belongs to the class-II aminoacyl-tRNA synthetase family. Type-1 seryl-tRNA synthetase subfamily. Homodimer. The tRNA molecule binds across the dimer.

It is found in the cytoplasm. The enzyme catalyses tRNA(Ser) + L-serine + ATP = L-seryl-tRNA(Ser) + AMP + diphosphate + H(+). It carries out the reaction tRNA(Sec) + L-serine + ATP = L-seryl-tRNA(Sec) + AMP + diphosphate + H(+). It participates in aminoacyl-tRNA biosynthesis; selenocysteinyl-tRNA(Sec) biosynthesis; L-seryl-tRNA(Sec) from L-serine and tRNA(Sec): step 1/1. Catalyzes the attachment of serine to tRNA(Ser). Is also able to aminoacylate tRNA(Sec) with serine, to form the misacylated tRNA L-seryl-tRNA(Sec), which will be further converted into selenocysteinyl-tRNA(Sec). The sequence is that of Serine--tRNA ligase from Francisella tularensis subsp. holarctica (strain FTNF002-00 / FTA).